The primary structure comprises 589 residues: Acyl-CoA ligase SID4 (589 aa).

Positions 12–20 (RLQQTLNHI) match the PTS2-type peroxisomal targeting signal motif. ATP contacts are provided by residues 228–236 (TSGSTGNPK), 367–372 (SSYGLT), aspartate 458, and arginine 473. Substrate is bound at residue threonine 372. Residues 481–483 (GGE), lysine 547, and 555–557 (FGL) each bind CoA. Lysine 572 provides a ligand contact to ATP.

The protein belongs to the ATP-dependent AMP-binding enzyme family.

It is found in the peroxisome. It participates in siderophore biosynthesis. In terms of biological role, acyl-CoA ligase; part of the gene cluster that mediates the biosynthesis of hydroxamate-containing siderophores that play a critical role in virulence via intracellular iron acquisition during macrophage infection. This Ajellomyces capsulatus (Darling's disease fungus) protein is Acyl-CoA ligase SID4.